Reading from the N-terminus, the 717-residue chain is Photosystem I P700 chlorophyll a apoprotein A1 (717 aa).

The next 8 membrane-spanning stretches (helical) occupy residues 59–82 (VFRA…FHGA), 145–168 (LYCT…FHYH), 184–208 (LNHH…HVSL), 280–298 (TAHH…GHMY), 335–358 (WHAQ…HHMY), 374–400 (LSLF…IFMV), 422–444 (AIVS…LYIH), and 520–538 (FLVH…LILL). [4Fe-4S] cluster is bound by residues cysteine 562 and cysteine 571. The next 2 helical transmembrane spans lie at 578–599 (HVFL…HFSW) and 653–675 (LSAY…MFLF). Residue histidine 664 participates in chlorophyll a' binding. Chlorophyll a-binding residues include methionine 672 and tyrosine 680. Phylloquinone is bound at residue tryptophan 681. Residues 713-717 (AVGVA) traverse the membrane as a helical segment.

Belongs to the PsaA/PsaB family. As to quaternary structure, the PsaA/B heterodimer binds the P700 chlorophyll special pair and subsequent electron acceptors. PSI consists of a core antenna complex that captures photons, and an electron transfer chain that converts photonic excitation into a charge separation. The eukaryotic PSI reaction center is composed of at least 11 subunits. P700 is a chlorophyll a/chlorophyll a' dimer, A0 is one or more chlorophyll a, A1 is one or both phylloquinones and FX is a shared 4Fe-4S iron-sulfur center. is required as a cofactor.

The protein localises to the plastid. It localises to the chloroplast thylakoid membrane. It carries out the reaction reduced [plastocyanin] + hnu + oxidized [2Fe-2S]-[ferredoxin] = oxidized [plastocyanin] + reduced [2Fe-2S]-[ferredoxin]. Functionally, psaA and PsaB bind P700, the primary electron donor of photosystem I (PSI), as well as the electron acceptors A0, A1 and FX. PSI is a plastocyanin-ferredoxin oxidoreductase, converting photonic excitation into a charge separation, which transfers an electron from the donor P700 chlorophyll pair to the spectroscopically characterized acceptors A0, A1, FX, FA and FB in turn. Oxidized P700 is reduced on the lumenal side of the thylakoid membrane by plastocyanin. This is Photosystem I P700 chlorophyll a apoprotein A1 from Cycas revoluta (Sago palm).